Reading from the N-terminus, the 306-residue chain is Abnormal cell migration protein 21 (306 aa).

TSP type-1 domains are found at residues 55 to 102 and 109 to 155; these read PGGW…AISS and FGSW…DECP. C-linked (Man) tryptophan glycosylation is found at Trp-58 and Trp-61. Cystine bridges form between Cys-121-Cys-149, Cys-123-Cys-154, and Cys-134-Cys-139. Residues 240 to 260 traverse the membrane as a helical segment; the sequence is CLPLHFAIPIFCFCILTGFLL.

In terms of processing, glycosylated via C-mannosylation by dpy-19 at Trp-58 and Trp-61.

Its subcellular location is the membrane. Required for determination of left/right asymmetry in nervous system. Acts together with unc-40 to control an initial left-right asymmetric polarization of the Q neuroblasts. Mig-21 and unc-40 may control the asymmetry in Wnt signaling response by restricting posterior polarization to one of the 2 Q neuroblasts. Involved in left-side QL posterior migration. In right-side QR, unc-40 and mig-21 pathways mutually inhibit each other in posterior migration, allowing anterior QR migration. The chain is Abnormal cell migration protein 21 (mig-21) from Caenorhabditis elegans.